The chain runs to 230 residues: L-aspartate/glutamate-specific racemase (230 aa).

Substrate is bound by residues Met-10, Gln-52, and 83 to 85 (TNT). Thr-83 serves as the catalytic Proton donor. Residue Cys-197 is the Proton acceptor of the active site. Residue 198 to 199 (TE) participates in substrate binding.

Belongs to the aspartate/glutamate racemases family. As to quaternary structure, homodimer.

The enzyme catalyses L-glutamate = D-glutamate. It carries out the reaction L-aspartate = D-aspartate. In terms of biological role, exhibits racemase activity for both L-glutamate and L-aspartate. This is L-aspartate/glutamate-specific racemase from Escherichia coli O157:H7.